Here is a 273-residue protein sequence, read N- to C-terminus: Dermonecrotic toxin LhSicTox-alphaIA2biv (273 aa).

H5 is an active-site residue. The Mg(2+) site is built by E25 and D27. Residue H41 is the Nucleophile of the active site. Disulfide bonds link C45–C51 and C47–C190. Residue D85 participates in Mg(2+) binding.

It belongs to the arthropod phospholipase D family. Class II subfamily. Mg(2+) is required as a cofactor. As to expression, expressed by the venom gland.

The protein resides in the secreted. The catalysed reaction is an N-(acyl)-sphingosylphosphocholine = an N-(acyl)-sphingosyl-1,3-cyclic phosphate + choline. The enzyme catalyses an N-(acyl)-sphingosylphosphoethanolamine = an N-(acyl)-sphingosyl-1,3-cyclic phosphate + ethanolamine. It carries out the reaction a 1-acyl-sn-glycero-3-phosphocholine = a 1-acyl-sn-glycero-2,3-cyclic phosphate + choline. It catalyses the reaction a 1-acyl-sn-glycero-3-phosphoethanolamine = a 1-acyl-sn-glycero-2,3-cyclic phosphate + ethanolamine. Functionally, dermonecrotic toxins cleave the phosphodiester linkage between the phosphate and headgroup of certain phospholipids (sphingolipid and lysolipid substrates), forming an alcohol (often choline) and a cyclic phosphate. This toxin acts on sphingomyelin (SM). It may also act on ceramide phosphoethanolamine (CPE), lysophosphatidylcholine (LPC) and lysophosphatidylethanolamine (LPE), but not on lysophosphatidylserine (LPS), and lysophosphatidylglycerol (LPG). It acts by transphosphatidylation, releasing exclusively cyclic phosphate products as second products. Induces dermonecrosis, hemolysis, increased vascular permeability, edema, inflammatory response, and platelet aggregation. The polypeptide is Dermonecrotic toxin LhSicTox-alphaIA2biv (Loxosceles hirsuta (Recluse spider)).